The following is a 292-amino-acid chain: Siderophore triacetylfusarinine C esterase (292 aa).

Triacetylfusarinine C contacts are provided by Arg-97, Ser-148, Tyr-149, Ser-174, Trp-176, and His-267.

The protein belongs to the esterase D family.

It localises to the cytoplasm. It catalyses the reaction triacetylfusarinine C + 3 H2O = 3 N-acetylfusarinine + Fe(3+). In terms of biological role, displays specific triacetylfusarinine C (TAFC) esterase activity but does not hydrolyze fusarinine C, which has the same core structure as TAFC. Hydrolysis optimizes but is not essential for TAFC-mediated iron uptake. Both extra- and intracellular siderophores have been shown to be crucial for the virulence. Subsequent to chelation of iron and uptake, FsC and TAFC are hydrolyzed and the iron is transferred to the metabolism or to the intracellular siderophore ferricrocin (FC) for transport and storage of iron. Hydrolyzes both TAFC and DF-TAFC with equal efficiencies, suggesting that its function might not be restricted to the release of iron from the siderophore but might also include the degradation of the iron-free chelator to protect cells. This Aspergillus fumigatus (strain ATCC MYA-4609 / CBS 101355 / FGSC A1100 / Af293) (Neosartorya fumigata) protein is Siderophore triacetylfusarinine C esterase.